An 88-amino-acid polypeptide reads, in one-letter code: Serine protease inhibitor Kazal-type 11 (88 aa).

The first 24 residues, 1–24 (MSSTWIKFLFILTLVLLPYFVAES), serve as a signal peptide directing secretion. One can recognise a Kazal-like domain in the interval 32–87 (LRKVPNCTLYKSESDCSRTLIPVCADNQMTYYNACYFCLEQLVSPIKYKYHGICTK). N-linked (GlcNAc...) asparagine glycosylation occurs at asparagine 37. Cystine bridges form between cysteine 38-cysteine 69, cysteine 47-cysteine 66, and cysteine 55-cysteine 85.

As to expression, expressed in epydiymis, in the caput. Also expressed in seminal vesicles.

The protein resides in the secreted. Probable serine protease inhibitor. In Mus musculus (Mouse), this protein is Serine protease inhibitor Kazal-type 11 (Spink11).